The sequence spans 311 residues: Glutamyl-Q tRNA(Asp) synthetase (311 aa).

L-glutamate-binding positions include 14-18 and Glu50; that span reads RYAPS. The 'HIGH' region motif lies at 17–27; the sequence is PSPSGDLHLGN. 4 residues coordinate Zn(2+): Cys104, Cys106, Tyr125, and Cys129. Tyr186 and Arg204 together coordinate L-glutamate. The 'KMSKS' region signature appears at 242–246; the sequence is RLAKR. ATP is bound at residue Lys245.

This sequence belongs to the class-I aminoacyl-tRNA synthetase family. GluQ subfamily. Requires Zn(2+) as cofactor.

In terms of biological role, catalyzes the tRNA-independent activation of glutamate in presence of ATP and the subsequent transfer of glutamate onto a tRNA(Asp). Glutamate is transferred on the 2-amino-5-(4,5-dihydroxy-2-cyclopenten-1-yl) moiety of the queuosine in the wobble position of the QUC anticodon. The protein is Glutamyl-Q tRNA(Asp) synthetase of Nocardia farcinica (strain IFM 10152).